Here is a 286-residue protein sequence, read N- to C-terminus: MNLKQKWDVYSRLTRIDRPIGTLLLLWPCLMALMLAAGGMPDLKVLVIFIIGVVIMRACGCIINDYADRDLDSFVERTRSRPLASGEISTKEALILFVILGLSAFGLVLLLNGLVVKLSVVGIILTIIYPFTKRITNMPQMFLGIVWSWSIPMAYAAQTGEVPMEAWWLFAANWCWTVAYDTMYAMVDRDDDLKVGIKSTAILFGKYDRQIIGLFQLAALACFIAAGWSADRGLLYGLGILTFVGFSTYQQMLIFDRERAPCFKAFLNNNWAGLALFVGLGADYLI.

Transmembrane regions (helical) follow at residues 21-40 (GTLLLLWPCLMALMLAAGGM), 95-115 (ILFVILGLSAFGLVLLLNGLV), 142-162 (FLGIVWSWSIPMAYAAQTGEV), 167-187 (WWLFAANWCWTVAYDTMYAMV), 210-230 (QIIGLFQLAALACFIAAGWSA), 235-255 (LYGLGILTFVGFSTYQQMLIF), and 266-286 (FLNNNWAGLALFVGLGADYLI).

Belongs to the UbiA prenyltransferase family. Mg(2+) serves as cofactor.

Its subcellular location is the cell inner membrane. The enzyme catalyses all-trans-octaprenyl diphosphate + 4-hydroxybenzoate = 4-hydroxy-3-(all-trans-octaprenyl)benzoate + diphosphate. It participates in cofactor biosynthesis; ubiquinone biosynthesis. In terms of biological role, catalyzes the prenylation of para-hydroxybenzoate (PHB) with an all-trans polyprenyl group. Mediates the second step in the final reaction sequence of ubiquinone-8 (UQ-8) biosynthesis, which is the condensation of the polyisoprenoid side chain with PHB, generating the first membrane-bound Q intermediate 3-octaprenyl-4-hydroxybenzoate. This Shewanella baltica (strain OS223) protein is 4-hydroxybenzoate octaprenyltransferase.